An 870-amino-acid chain; its full sequence is Outer membrane usher protein FimD (870 aa).

The N-terminal stretch at 1–27 (MKKTTWFAGRFPGYVSPLSSVALSVLA) is a signal peptide. Cysteine 843 and cysteine 865 are oxidised to a cystine.

It belongs to the fimbrial export usher family.

Its subcellular location is the cell outer membrane. Its function is as follows. Involved in the export and assembly of FimA fimbrial subunits across the outer membrane. This is Outer membrane usher protein FimD (fimD) from Salmonella typhimurium (strain LT2 / SGSC1412 / ATCC 700720).